Reading from the N-terminus, the 143-residue chain is Large ribosomal subunit protein uL11 (143 aa).

Belongs to the universal ribosomal protein uL11 family. Part of the ribosomal stalk of the 50S ribosomal subunit. Interacts with L10 and the large rRNA to form the base of the stalk. L10 forms an elongated spine to which L12 dimers bind in a sequential fashion forming a multimeric L10(L12)X complex. Post-translationally, one or more lysine residues are methylated.

Functionally, forms part of the ribosomal stalk which helps the ribosome interact with GTP-bound translation factors. The protein is Large ribosomal subunit protein uL11 of Nitrosomonas eutropha (strain DSM 101675 / C91 / Nm57).